A 320-amino-acid chain; its full sequence is Aspartate carbamoyltransferase catalytic subunit (320 aa).

The carbamoyl phosphate site is built by Arg53 and Thr54. Lys82 serves as a coordination point for L-aspartate. Residues Arg103, His131, and Gln134 each coordinate carbamoyl phosphate. Residues Arg164 and Arg227 each contribute to the L-aspartate site. Residues Leu266 and Pro267 each contribute to the carbamoyl phosphate site.

It belongs to the aspartate/ornithine carbamoyltransferase superfamily. ATCase family. In terms of assembly, heterododecamer (2C3:3R2) of six catalytic PyrB chains organized as two trimers (C3), and six regulatory PyrI chains organized as three dimers (R2).

It catalyses the reaction carbamoyl phosphate + L-aspartate = N-carbamoyl-L-aspartate + phosphate + H(+). It participates in pyrimidine metabolism; UMP biosynthesis via de novo pathway; (S)-dihydroorotate from bicarbonate: step 2/3. Catalyzes the condensation of carbamoyl phosphate and aspartate to form carbamoyl aspartate and inorganic phosphate, the committed step in the de novo pyrimidine nucleotide biosynthesis pathway. This chain is Aspartate carbamoyltransferase catalytic subunit, found in Bifidobacterium adolescentis (strain ATCC 15703 / DSM 20083 / NCTC 11814 / E194a).